Here is a 565-residue protein sequence, read N- to C-terminus: uncharacterized protein (565 aa).

This is an uncharacterized protein from Acanthamoeba polyphaga mimivirus (APMV).